We begin with the raw amino-acid sequence, 62 residues long: Short neurotoxin 3 (62 aa).

4 disulfides stabilise this stretch: Cys-3-Cys-24, Cys-17-Cys-41, Cys-43-Cys-54, and Cys-55-Cys-60.

The protein belongs to the three-finger toxin family. Short-chain subfamily. Type I alpha-neurotoxin sub-subfamily. In terms of tissue distribution, expressed by the venom gland.

The protein resides in the secreted. Binds to muscle nicotinic acetylcholine receptor (nAChR) and inhibit acetylcholine from binding to the receptor, thereby impairing neuromuscular transmission. In Naja mossambica (Mozambique spitting cobra), this protein is Short neurotoxin 3.